A 194-amino-acid chain; its full sequence is Large ribosomal subunit protein bL9 (194 aa).

The interval 165-194 (PEDAEEAVANEEEAEAALLDDEDADEYEQG) is disordered. Residues 166-194 (EDAEEAVANEEEAEAALLDDEDADEYEQG) are compositionally biased toward acidic residues.

This sequence belongs to the bacterial ribosomal protein bL9 family.

In terms of biological role, binds to the 23S rRNA. The chain is Large ribosomal subunit protein bL9 from Rhodospirillum rubrum (strain ATCC 11170 / ATH 1.1.1 / DSM 467 / LMG 4362 / NCIMB 8255 / S1).